A 158-amino-acid chain; its full sequence is Protein EOLA1 (158 aa).

Positions 6-92 constitute an ASCH domain; that stretch reads LSFRQPYAGF…IAGLVDIGET (87 aa).

Belongs to the EOLA family. As to quaternary structure, interacts with MT2A. As to expression, expressed primarily in heart, skeletal muscle, kidney, liver and placenta. Relatively high level of expression in spleen, colon and small intestine. Almost no expression in brain, thymus, lung and peripheral blood leukocytes. Expressed in epithelial cells (at protein level).

Functionally, may play a role in cell protection during the inflammatory response. In epithelial cells, negatively regulates IL6 production and apoptosis through the regulation of MT2A expression. In Homo sapiens (Human), this protein is Protein EOLA1.